The sequence spans 196 residues: Peptidyl-tRNA hydrolase (196 aa).

A tRNA-binding site is contributed by Y17. The Proton acceptor role is filled by H22. TRNA contacts are provided by F68, N70, and N116.

Belongs to the PTH family. As to quaternary structure, monomer.

It localises to the cytoplasm. The enzyme catalyses an N-acyl-L-alpha-aminoacyl-tRNA + H2O = an N-acyl-L-amino acid + a tRNA + H(+). Its function is as follows. Hydrolyzes ribosome-free peptidyl-tRNAs (with 1 or more amino acids incorporated), which drop off the ribosome during protein synthesis, or as a result of ribosome stalling. Functionally, catalyzes the release of premature peptidyl moieties from peptidyl-tRNA molecules trapped in stalled 50S ribosomal subunits, and thus maintains levels of free tRNAs and 50S ribosomes. The protein is Peptidyl-tRNA hydrolase of Serratia proteamaculans (strain 568).